The primary structure comprises 429 residues: MLSIAEVSTKAYVGSKVSIRGWVYRIRSSGGVTFVVVRDSSGIIQCTARKNELPEDVYDTISSLGIESSVEFHGTLKEDRRSPSGYEIAVDSFRVYQKNDVFPITKDQGEEFLLDNRHLWLRSREFTSVLKIRSTIFRSFADFFYENGYYQVQTPFMVSTAVEGGSTLFKVDFFGEPIYLNQSAQFYLETMIYSLEKVFTIAPSFRAEKSRTRRHLTEYWHAEAEVAWIDNNEMMDIEERMIYYIVSRVTEDNEDELKMLNRDPEVLKAMKPPFPRIRYSEIIKVANSIGLPLKYGDDLGADEERQITMKYDRPIFVTNYPKDLKPFYMPVDPENPGEVLNHDMLAPEGYGEIIGGSQRIWNYDELMQRIREANLDESAYYWYVDLRKYGSVPHSGFGLGLDRLAMWIMHLDNIREAIPYPRTIRRTKP.

It belongs to the class-II aminoacyl-tRNA synthetase family.

It localises to the cytoplasm. The enzyme catalyses tRNA(Asn) + L-asparagine + ATP = L-asparaginyl-tRNA(Asn) + AMP + diphosphate + H(+). The chain is Asparagine--tRNA ligase from Thermoplasma acidophilum (strain ATCC 25905 / DSM 1728 / JCM 9062 / NBRC 15155 / AMRC-C165).